A 339-amino-acid chain; its full sequence is tRNA (guanine-N(7)-)-methyltransferase (339 aa).

The segment at 1 to 20 (MTPPPAKRQKRNEYRKANTA) is disordered. S-adenosyl-L-methionine contacts are provided by residues Gly-94 and 117–118 (EI). Residues 141 to 186 (RSSAIPSESSPAAQQPQQHHQQQLQATETAADAASPSSPDATGETL) are disordered. Over residues 142-181 (SSAIPSESSPAAQQPQQHHQQQLQATETAADAASPSSPDA) the composition is skewed to low complexity. Residues 202 to 203 (NT) and Cys-222 each bind S-adenosyl-L-methionine. Asp-225 is a catalytic residue. S-adenosyl-L-methionine is bound at residue 311–313 (TEE).

The protein belongs to the class I-like SAM-binding methyltransferase superfamily. TrmB family. In terms of assembly, forms a complex with trm82.

The protein localises to the nucleus. It catalyses the reaction guanosine(46) in tRNA + S-adenosyl-L-methionine = N(7)-methylguanosine(46) in tRNA + S-adenosyl-L-homocysteine. The protein operates within tRNA modification; N(7)-methylguanine-tRNA biosynthesis. Functionally, catalyzes the formation of N(7)-methylguanine at position 46 (m7G46) in tRNA. The protein is tRNA (guanine-N(7)-)-methyltransferase (trm8) of Aspergillus clavatus (strain ATCC 1007 / CBS 513.65 / DSM 816 / NCTC 3887 / NRRL 1 / QM 1276 / 107).